A 341-amino-acid polypeptide reads, in one-letter code: tRNA N6-adenosine threonylcarbamoyltransferase (341 aa).

The Fe cation site is built by histidine 115 and histidine 119. Residues 138-142, aspartate 171, glycine 184, and asparagine 276 contribute to the substrate site; that span reads LVSGG. Aspartate 304 lines the Fe cation pocket.

It belongs to the KAE1 / TsaD family. Fe(2+) serves as cofactor.

The protein localises to the cytoplasm. The enzyme catalyses L-threonylcarbamoyladenylate + adenosine(37) in tRNA = N(6)-L-threonylcarbamoyladenosine(37) in tRNA + AMP + H(+). In terms of biological role, required for the formation of a threonylcarbamoyl group on adenosine at position 37 (t(6)A37) in tRNAs that read codons beginning with adenine. Is involved in the transfer of the threonylcarbamoyl moiety of threonylcarbamoyl-AMP (TC-AMP) to the N6 group of A37, together with TsaE and TsaB. TsaD likely plays a direct catalytic role in this reaction. This Stenotrophomonas maltophilia (strain R551-3) protein is tRNA N6-adenosine threonylcarbamoyltransferase.